We begin with the raw amino-acid sequence, 303 residues long: MASWAKGRSYLAPGLLQGQVAIVTGGATGIGKAIVKELLELGSNVVIASRKLERLKSAADELQANLPPTKQARVIPIQCNIRNEEEVNNLVKSTLDTFGKINFLVNNGGGQFLSPAEHISSKGWHAVLETNLTGTFYMCKAVYSSWMKEHGGSIVNIIVPTKAGFPLAVHSGAARAGVYNLTKSLALEWACSGIRINCVAPGVIYSQTAVENYGSWGQSFFEGSFQKIPAKRIGVPEEVSSVVCFLLSPAASFITGQSVDVDGGRSLYTHSYEVPDHDNWPKGAGDLSVVKKMKETFKEKAKL.

23–47 (VTGGATGIGKAIVKELLELGSNVVI) serves as a coordination point for NADP(+). Position 32 is an N6-succinyllysine (Lys-32). Position 49 is a phosphoserine (Ser-49). Residue Tyr-179 is the Proton acceptor of the active site. At Tyr-179 the chain carries Phosphotyrosine. The short motif at 301–303 (AKL) is the Microbody targeting signal element.

Belongs to the short-chain dehydrogenases/reductases (SDR) family. As to quaternary structure, interacts with PEX5, probably required to target it into peroxisomes.

The protein resides in the peroxisome. It catalyses the reaction a (2E)-enoyl-CoA + NADPH + H(+) = a 2,3-saturated acyl-CoA + NADP(+). It carries out the reaction (2E)-decenoyl-CoA + NADPH + H(+) = decanoyl-CoA + NADP(+). The enzyme catalyses (2E)-hexenoyl-CoA + NADPH + H(+) = hexanoyl-CoA + NADP(+). The catalysed reaction is (2E)-octenoyl-CoA + NADPH + H(+) = octanoyl-CoA + NADP(+). It catalyses the reaction (2E)-dodecenoyl-CoA + NADPH + H(+) = dodecanoyl-CoA + NADP(+). It carries out the reaction (2E)-tetradecenoyl-CoA + NADPH + H(+) = tetradecanoyl-CoA + NADP(+). Its pathway is lipid metabolism; fatty acid biosynthesis. In terms of biological role, participates in chain elongation of fatty acids. Catalyzes the reduction of trans-2-enoyl-CoAs of varying chain lengths from 6:1 to 16:1, having maximum activity with 10:1 CoA. Has no 2,4-dienoyl-CoA reductase activity. In Homo sapiens (Human), this protein is Peroxisomal trans-2-enoyl-CoA reductase.